The primary structure comprises 524 residues: N-acetylgalactosamine-6-sulfatase (524 aa).

An N-terminal signal peptide occupies residues 1 to 27 (MTACSTAIRAQQLLLPVLSALGLLAAG). The tract at residues 28–381 (APQPPNIVLL…PTMLQGHIID (354 aa)) is catalytic domain. Asp-40, Asp-41, and Cys-80 together coordinate Ca(2+). Cys-80 functions as the Nucleophile in the catalytic mechanism. Cys-80 bears the 3-oxoalanine (Cys) mark. The active site involves His-143. Asn-205 carries N-linked (GlcNAc...) asparagine glycosylation. Ca(2+) is bound by residues Asp-290 and Asn-291. An intrachain disulfide couples Cys-310 to Cys-421. Asn-425 carries N-linked (GlcNAc...) asparagine glycosylation. 2 disulfides stabilise this stretch: Cys-491/Cys-520 and Cys-503/Cys-509.

The protein belongs to the sulfatase family. As to quaternary structure, homodimer. Ca(2+) serves as cofactor. In terms of processing, the conversion to 3-oxoalanine (also known as C-formylglycine, FGly), of a serine or cysteine residue in prokaryotes and of a cysteine residue in eukaryotes, is critical for catalytic activity.

Its subcellular location is the lysosome. It carries out the reaction Hydrolysis of the 6-sulfate groups of the N-acetyl-D-galactosamine 6-sulfate units of chondroitin sulfate and of the D-galactose 6-sulfate units of keratan sulfate.. This is N-acetylgalactosamine-6-sulfatase (Galns) from Rattus norvegicus (Rat).